Reading from the N-terminus, the 157-residue chain is Cyclic pyranopterin monophosphate synthase (157 aa).

Substrate-binding positions include 74–76 and 112–113; these read MCH and ME. The active site involves aspartate 127.

It belongs to the MoaC family. In terms of assembly, homohexamer; trimer of dimers.

The enzyme catalyses (8S)-3',8-cyclo-7,8-dihydroguanosine 5'-triphosphate = cyclic pyranopterin phosphate + diphosphate. Its pathway is cofactor biosynthesis; molybdopterin biosynthesis. In terms of biological role, catalyzes the conversion of (8S)-3',8-cyclo-7,8-dihydroguanosine 5'-triphosphate to cyclic pyranopterin monophosphate (cPMP). The sequence is that of Cyclic pyranopterin monophosphate synthase from Campylobacter jejuni subsp. jejuni serotype O:6 (strain 81116 / NCTC 11828).